Here is a 454-residue protein sequence, read N- to C-terminus: Neuronal acetylcholine receptor subunit alpha-5 (454 aa).

A disordered region spans residues 1–26 (MPLRARSRKPGAGPAARAPQAGVSEP). Residues 1 to 29 (MPLRARSRKPGAGPAARAPQAGVSEPSFV) form the signal peptide. A compositionally biased stretch (low complexity) spans 10–22 (PGAGPAARAPQAG). Over 30–240 (AKSEDRLFKH…IIRRLPLFYT (211 aa)) the chain is Extracellular. N-linked (GlcNAc...) asparagine glycosylation is found at Asn55, Asn169, and Asn215. A disulfide bridge links Cys156 with Cys170. Cys220 and Cys221 are oxidised to a cystine. The next 3 helical transmembrane spans lie at 241 to 261 (LFLI…FYLP), 270 to 290 (LCTS…EIIP), and 303 to 323 (LVFT…AINI). At 324 to 416 (HHRSSSTHNA…KFIAQVLDRM (93 aa)) the chain is on the cytoplasmic side. A helical membrane pass occupies residues 417 to 437 (FLWAFLLVSIIGSLVLFIPVI). Residues 438–454 (HKWASIIVPVHIGSTNT) are Extracellular-facing.

This sequence belongs to the ligand-gated ion channel (TC 1.A.9) family. Acetylcholine receptor (TC 1.A.9.1) subfamily. Alpha-5/CHRNA5 sub-subfamily. As to quaternary structure, neuronal AChR that forms heteropentamers composed of two different type of subunits: alpha and non-alpha (beta). CHRNA5/alpha-5 subunit is only able to form functional nAChRs when co-assembled with another alpha subunit, can be combined to CHRNA4/alpha-4 or CHRNA3/alpha-3 and CHRNB4/beta-4 or CHRNB2/beta-2 to give rise to functional receptors. Interacts with LYPD6.

Its subcellular location is the synaptic cell membrane. It localises to the cell membrane. The enzyme catalyses Ca(2+)(in) = Ca(2+)(out). It catalyses the reaction K(+)(in) = K(+)(out). It carries out the reaction Na(+)(in) = Na(+)(out). With respect to regulation, activated by a myriad of ligands such as acetylcholine, cytisine, nicotine, choline and epibatidine. Its function is as follows. Component of neuronal acetylcholine receptors (nAChRs) that function as pentameric, ligand-gated cation channels with high calcium permeability among other activities. nAChRs are excitatory neurotrasnmitter receptors formed by a collection of nAChR subunits known to mediate synaptic transmission in the nervous system and the neuromuscular junction. Each nAchR subunit confers differential attributes to channel properties, including activation, deactivation and desensitization kinetics, pH sensitivity, cation permeability, and binding to allosteric modulators. Has an accessory rather than functional role and is only able to form functional nAChRs when co-assembled with another beta subunit. Participates in pentameric assemblies along with CHRNA3, CHRNA4, CHRNB2 and CHRNB4. Increases receptor sensitivity to acetylcholine and nicotine when associated with CHRNA4 and CHRNB2. Plays a role in nicotine addiction. The chain is Neuronal acetylcholine receptor subunit alpha-5 (CHRNA5) from Gallus gallus (Chicken).